The chain runs to 421 residues: ATP-dependent RNA helicase RhlB (421 aa).

The short motif at 9–37 is the Q motif element; that stretch reads QKFSDFALHPQVVEALEKKGFYNCTPIQA. One can recognise a Helicase ATP-binding domain in the interval 40–219; the sequence is LPLTLAGRDV…FEQMNNAEYV (180 aa). 53 to 60 contacts ATP; it reads AQTGTGKT. A DEAD box motif is present at residues 165–168; it reads DEAD. The Helicase C-terminal domain occupies 245–390; sequence RLLQTLIEEE…VSKYNPEALM (146 aa). Positions 396–421 are disordered; that stretch reads PLRLTRSRPGNGPRRAGAPRNRRRSG. The segment covering 402–414 has biased composition (low complexity); it reads SRPGNGPRRAGAP.

The protein belongs to the DEAD box helicase family. RhlB subfamily. As to quaternary structure, component of the RNA degradosome, which is a multiprotein complex involved in RNA processing and mRNA degradation.

It is found in the cytoplasm. It catalyses the reaction ATP + H2O = ADP + phosphate + H(+). In terms of biological role, DEAD-box RNA helicase involved in RNA degradation. Has RNA-dependent ATPase activity and unwinds double-stranded RNA. This chain is ATP-dependent RNA helicase RhlB, found in Salmonella agona (strain SL483).